We begin with the raw amino-acid sequence, 197 residues long: Beta-crystallin A2 (197 aa).

Residues Met1–Pro11 form an N-terminal arm region. Beta/gamma crystallin 'Greek key' domains follow at residues Ala12–Asn52 and Gly53–Leu99. The segment at Cys100–Asp105 is connecting peptide. 2 consecutive Beta/gamma crystallin 'Greek key' domains span residues Ser106–Ser147 and Gly148–Gln196.

It belongs to the beta/gamma-crystallin family. In terms of assembly, homo/heterodimer, or complexes of higher-order. The structure of beta-crystallin oligomers seems to be stabilized through interactions between the N-terminal arms.

In terms of biological role, crystallins are the dominant structural components of the vertebrate eye lens. The protein is Beta-crystallin A2 (CRYBA2) of Bos taurus (Bovine).